Consider the following 127-residue polypeptide: MAAINIVKKRTKPFKRHQSDLFKRVGESWRKPRGIDSCVRRRFRGTISMPKIGYGNNKKTRYCMPNGLKAFLVRNVSDVELLLMHNKTYAAEIASNVSARKRVEIVEKARALGVKVTNAGAKVRSQE.

It belongs to the eukaryotic ribosomal protein eL32 family. As to quaternary structure, component of the large ribosomal subunit (LSU). Mature yeast ribosomes consist of a small (40S) and a large (60S) subunit. The 40S small subunit contains 1 molecule of ribosomal RNA (18S rRNA) and at least 33 different proteins. The large 60S subunit contains 3 rRNA molecules (25S, 5.8S and 5S rRNA) and at least 46 different proteins.

The protein localises to the cytoplasm. It is found in the nucleus. Its subcellular location is the nucleolus. Component of the ribosome, a large ribonucleoprotein complex responsible for the synthesis of proteins in the cell. The small ribosomal subunit (SSU) binds messenger RNAs (mRNAs) and translates the encoded message by selecting cognate aminoacyl-transfer RNA (tRNA) molecules. The large subunit (LSU) contains the ribosomal catalytic site termed the peptidyl transferase center (PTC), which catalyzes the formation of peptide bonds, thereby polymerizing the amino acids delivered by tRNAs into a polypeptide chain. The nascent polypeptides leave the ribosome through a tunnel in the LSU and interact with protein factors that function in enzymatic processing, targeting, and the membrane insertion of nascent chains at the exit of the ribosomal tunnel. In Schizosaccharomyces pombe (strain 972 / ATCC 24843) (Fission yeast), this protein is Large ribosomal subunit protein eL32B (rpl3201).